The sequence spans 414 residues: Histidinol dehydrogenase (414 aa).

NAD(+) is bound by residues Tyr116, Gln177, and Asn200. Substrate contacts are provided by Thr223, Gln245, and His248. The Zn(2+) site is built by Gln245 and His248. Catalysis depends on proton acceptor residues Glu313 and His314. Residues His314, Asp347, Glu401, and His406 each coordinate substrate. Asp347 contacts Zn(2+). His406 is a Zn(2+) binding site.

It belongs to the histidinol dehydrogenase family. Zn(2+) is required as a cofactor.

It catalyses the reaction L-histidinol + 2 NAD(+) + H2O = L-histidine + 2 NADH + 3 H(+). The protein operates within amino-acid biosynthesis; L-histidine biosynthesis; L-histidine from 5-phospho-alpha-D-ribose 1-diphosphate: step 9/9. Catalyzes the sequential NAD-dependent oxidations of L-histidinol to L-histidinaldehyde and then to L-histidine. This is Histidinol dehydrogenase from Staphylococcus epidermidis (strain ATCC 12228 / FDA PCI 1200).